The primary structure comprises 170 residues: Adenine phosphoribosyltransferase (170 aa).

It belongs to the purine/pyrimidine phosphoribosyltransferase family. Homodimer.

It localises to the cytoplasm. It catalyses the reaction AMP + diphosphate = 5-phospho-alpha-D-ribose 1-diphosphate + adenine. Its pathway is purine metabolism; AMP biosynthesis via salvage pathway; AMP from adenine: step 1/1. In terms of biological role, catalyzes a salvage reaction resulting in the formation of AMP, that is energically less costly than de novo synthesis. The protein is Adenine phosphoribosyltransferase of Geobacillus kaustophilus (strain HTA426).